A 177-amino-acid chain; its full sequence is tRNA (cytidine(56)-2'-O)-methyltransferase (177 aa).

S-adenosyl-L-methionine-binding positions include L83 and 108-112 (GAEKV).

The protein belongs to the aTrm56 family. In terms of assembly, homodimer.

It is found in the cytoplasm. The catalysed reaction is cytidine(56) in tRNA + S-adenosyl-L-methionine = 2'-O-methylcytidine(56) in tRNA + S-adenosyl-L-homocysteine + H(+). Functionally, specifically catalyzes the AdoMet-dependent 2'-O-ribose methylation of cytidine at position 56 in tRNAs. The polypeptide is tRNA (cytidine(56)-2'-O)-methyltransferase (Nitrosopumilus maritimus (strain SCM1)).